The sequence spans 104 residues: Large ribosomal subunit protein bL21 (104 aa).

The protein belongs to the bacterial ribosomal protein bL21 family. In terms of assembly, part of the 50S ribosomal subunit. Contacts protein L20.

This protein binds to 23S rRNA in the presence of protein L20. This Francisella philomiragia subsp. philomiragia (strain ATCC 25017 / CCUG 19701 / FSC 153 / O#319-036) protein is Large ribosomal subunit protein bL21.